The chain runs to 588 residues: Pre-mRNA 3'-end-processing factor FIP1 (588 aa).

Over residues 1–10 (MSAGEVERLV) the composition is skewed to basic and acidic residues. Disordered stretches follow at residues 1-81 (MSAG…EDDV), 223-291 (QGRT…ESPD), and 334-588 (VDNN…TPAE). The interval 1–96 (MSAGEVERLV…DIKTGAPQYG (96 aa)) is sufficient for interaction with PAPOLA. Residues 1–341 (MSAGEVERLV…TAVDNNFSKP (341 aa)) are necessary for stimulating PAPOLA activity. Acidic residues-rich tracts occupy residues 19 to 40 (GDEEEEWLYGDENEVERPEEEN) and 66 to 80 (TEDDSDSDSDDDEDD). Residues S70, S72, and S74 each carry the phosphoserine modification. A sufficient for interaction with CPSF4 region spans residues 122-228 (KGVDLDAPGS…FKVQQGRTGN (107 aa)). Over residues 259–270 (STSSQSQTSTAS) the composition is skewed to low complexity. A compositionally biased stretch (basic and acidic residues) spans 280–291 (WQDRYGRAESPD). A Phosphoserine modification is found at S289. Residues 340–398 (KPPPFFPPGAPPTHLPPPPFLPPPPTVSTAPPLIPPPGIPITVPPPGFPPPPGAPPPSL) are compositionally biased toward pro residues. Y420 carries the phosphotyrosine modification. The segment at 437–588 (SLVDTSKQWD…QESTEATPAE (152 aa)) is sufficient for interaction with CPSF1 and CSTF3. Residues 448 to 486 (YARREKDRDRERDRDRERDRDRDRERERTRERERERDHS) are compositionally biased toward basic and acidic residues. An arg/Asp/Glu-rich domain region spans residues 451–484 (REKDRDRERDRDRERDRDRDRERERTRERERERD). S486 carries the post-translational modification Phosphoserine. A Phosphothreonine modification is found at T488. Residues S490 and S494 each carry the phosphoserine modification. The segment covering 495–522 (DEERYRYREYAERGYERHRASREKEERH) has biased composition (basic and acidic residues). The segment covering 536–545 (KSSRSNSRRR) has biased composition (basic residues). S548 is modified (phosphoserine). Over residues 554–564 (HRRHKHKKSKR) the composition is skewed to basic residues.

Belongs to the FIP1 family. As to quaternary structure, component of the cleavage and polyadenylation specificity factor (CPSF) complex, composed of CPSF1, CPSF2, CPSF3, CPSF4 and FIP1L1. Found in a complex with CPSF1, FIP1L1 and PAPOLA. Interacts with CPSF1, CPSF4, CSTF2 and CSTF3. Interacts with AHCYL1 (when phosphorylated); the interaction is direct and associates AHCYL1 with the CPSF complex and RNA. Interacts with PAPOLA; the interaction seems to be increased by the interaction with AHCYL1. Interacts with NUDT21/CPSF5; this interaction occurs in a RNA sequence-specific manner. Interacts (preferentially via unphosphorylated form and Arg/Glu/Asp-rich domain) with CPSF6 (via Arg/Ser-rich domain); this interaction mediates, at least in part, the interaction between the CFIm and CPSF complexes and may be inhibited by CPSF6 hyper-phosphorylation. Interacts (preferentially via unphosphorylated form and Arg/Asp/Glu-rich domain) with CPSF7 (via Arg/Ser-rich domain); this interaction mediates, at least in part, the interaction between the CFIm and CPSF complexes and may be inhibited by CPSF7 hyper-phosphorylation.

It localises to the nucleus. In terms of biological role, component of the cleavage and polyadenylation specificity factor (CPSF) complex that plays a key role in pre-mRNA 3'-end formation, recognizing the AAUAAA signal sequence and interacting with poly(A) polymerase and other factors to bring about cleavage and poly(A) addition. FIP1L1 contributes to poly(A) site recognition and stimulates poly(A) addition. Binds to U-rich RNA sequence elements surrounding the poly(A) site. May act to tether poly(A) polymerase to the CPSF complex. In Pongo abelii (Sumatran orangutan), this protein is Pre-mRNA 3'-end-processing factor FIP1 (FIP1L1).